A 298-amino-acid chain; its full sequence is Ethanolamine ammonia-lyase small subunit (298 aa).

Residues 1–19 are targets protein to the BMC; the sequence is MDQKQIEEIVRSVMASMGQ. Residues V210, E231, and C261 each coordinate adenosylcob(III)alamin.

The protein belongs to the EutC family. As to quaternary structure, the basic unit is a heterodimer which dimerizes to form tetramers. The heterotetramers trimerize; 6 large subunits form a core ring with 6 small subunits projecting outwards. Interacts with EutS, which targets it to the interior of the BMC. It depends on adenosylcob(III)alamin as a cofactor.

Its subcellular location is the bacterial microcompartment. It carries out the reaction ethanolamine = acetaldehyde + NH4(+). The protein operates within amine and polyamine degradation; ethanolamine degradation. Functionally, catalyzes the deamination of various vicinal amino-alcohols to oxo compounds. It is spontaneously inactivated by its substrate and reactivated by EutA. May play a role in bacterial microcompartment (BMC) assembly or maintenance. Directly targeted to the BMC. In terms of biological role, expression of the eut operon allows this bacteria to use ethanolamine (EA) as a carbon, nitrogen and energy source. It relies on cobalamin (vitamin B12) both as a cofactor for the ethanolamine ammonia-lyase activity and to induce the operon. EA enhances bacterial survival in macrophages in a concentration-dependent manner, suggesting it is an important nutrient during infection. The protein is Ethanolamine ammonia-lyase small subunit of Salmonella typhimurium (strain LT2 / SGSC1412 / ATCC 700720).